Here is a 604-residue protein sequence, read N- to C-terminus: Uptake hydrogenase large subunit (604 aa).

The Ni(2+) site is built by C76, C79, C583, and C586.

Belongs to the [NiFe]/[NiFeSe] hydrogenase large subunit family. In terms of assembly, heterodimer of a large and a small subunit. It depends on Ni(2+) as a cofactor.

It localises to the cell membrane. It carries out the reaction H2 + A = AH2. This enzyme recycles the H(2) produced by nitrogenase to increase the production of ATP and to protect nitrogenase against inhibition or damage by O(2) under carbon- or phosphate-limited conditions. This Afipia carboxidovorans (strain ATCC 49405 / DSM 1227 / KCTC 32145 / OM5) (Oligotropha carboxidovorans) protein is Uptake hydrogenase large subunit (hoxL).